The sequence spans 298 residues: Heat stress transcription factor C-2a (298 aa).

The segment at 105–128 is disordered; that stretch reads SSGGGGAKRKEEAGGCGGGGEAAA. Residues 145–181 form a hydrophobic repeat HR-A/B region; that stretch reads LRREQREIEGRVAAMWRRVQETERRPKQMLAFLVKVV. Positions 213–216 match the Nuclear localization signal motif; that stretch reads KRPR.

Belongs to the HSF family. Class C subfamily. As to quaternary structure, homotrimer. Exhibits temperature-dependent phosphorylation.

It localises to the nucleus. Transcriptional regulator that specifically binds DNA of heat shock promoter elements (HSE). This is Heat stress transcription factor C-2a (HSFC2A) from Oryza sativa subsp. japonica (Rice).